Reading from the N-terminus, the 96-residue chain is Cathelin (96 aa).

Pyrrolidone carboxylic acid is present on glutamine 1. Residues 31-50 (DQPPKADEDPGTPKPVSFTV) are disordered. Cystine bridges form between cysteine 55-cysteine 66 and cysteine 73-cysteine 90.

This sequence belongs to the cathelicidin family.

The protein localises to the secreted. Probably a microbicidal peptide. The polypeptide is Cathelin (Sus scrofa (Pig)).